Consider the following 63-residue polypeptide: uncharacterized protein (63 aa).

This is an uncharacterized protein from Homo sapiens (Human).